A 296-amino-acid polypeptide reads, in one-letter code: Cation-efflux pump FieF (296 aa).

Over M1 to S18 the chain is Cytoplasmic. The helical transmembrane segment at V19 to A32 threads the bilayer. Topologically, residues W33 to A43 are periplasmic. Residues S44–I60 form a helical membrane-spanning segment. The Zn(2+) site is built by D47, D51, D70, H73, and H77. At A61–L83 the chain is on the cytoplasmic side. Residues A84–E105 traverse the membrane as a helical segment. Over R106–G119 the chain is Periplasmic. Residues V120–K138 form a helical membrane-spanning segment. Topologically, residues R139–N145 are cytoplasmic. The chain crosses the membrane as a helical span at residues S146–L160. 2 residues coordinate Zn(2+): H155 and D159. Residues F161 to A180 lie on the Periplasmic side of the membrane. The helical transmembrane segment at D181–G200 threads the bilayer. Topologically, residues Y201 to Q296 are cytoplasmic. Positions 234, 235, 250, 263, 285, and 287 each coordinate Zn(2+).

It belongs to the cation diffusion facilitator (CDF) transporter (TC 2.A.4) family. FieF subfamily. Homodimer. The subunits are held together in a parallel orientation through zinc binding at the interface of the cytoplasmic domains.

The protein resides in the cell inner membrane. It carries out the reaction Zn(2+)(in) + H(+)(out) = Zn(2+)(out) + H(+)(in). It catalyses the reaction Cd(2+)(in) + H(+)(out) = Cd(2+)(out) + H(+)(in). The catalysed reaction is Fe(2+)(in) + H(+)(out) = Fe(2+)(out) + H(+)(in). Its activity is regulated as follows. Cytoplasmic zinc binding may trigger movements of two electrically repulsive cytoplasmic domains and reorient transmembrane helices, thereby modulating coordination geometry of the active site for zinc transport. It may modulate activity in response to cytoplasmic metal fluctuations. In terms of biological role, divalent metal cation transporter which exports Zn(2+), Cd(2+) and possibly Fe(2+). Zn(2+)/H(+) antiporter capable of using the proton motive force to remove Zn(2+) from the cytoplasm. May be involved in zinc and iron detoxification by efflux. In Shewanella oneidensis (strain ATCC 700550 / JCM 31522 / CIP 106686 / LMG 19005 / NCIMB 14063 / MR-1), this protein is Cation-efflux pump FieF.